The following is a 264-amino-acid chain: Thymidylate synthase (264 aa).

A dUMP-binding site is contributed by R21. Position 51 (H51) interacts with (6R)-5,10-methylene-5,6,7,8-tetrahydrofolate. 126–127 provides a ligand contact to dUMP; it reads RR. C146 serves as the catalytic Nucleophile. Residues 166 to 169, N177, and 207 to 209 each bind dUMP; these read RSAD and HLY. A (6R)-5,10-methylene-5,6,7,8-tetrahydrofolate-binding site is contributed by D169. A (6R)-5,10-methylene-5,6,7,8-tetrahydrofolate-binding site is contributed by A263.

It belongs to the thymidylate synthase family. Bacterial-type ThyA subfamily. Homodimer.

The protein localises to the cytoplasm. The enzyme catalyses dUMP + (6R)-5,10-methylene-5,6,7,8-tetrahydrofolate = 7,8-dihydrofolate + dTMP. The protein operates within pyrimidine metabolism; dTTP biosynthesis. Catalyzes the reductive methylation of 2'-deoxyuridine-5'-monophosphate (dUMP) to 2'-deoxythymidine-5'-monophosphate (dTMP) while utilizing 5,10-methylenetetrahydrofolate (mTHF) as the methyl donor and reductant in the reaction, yielding dihydrofolate (DHF) as a by-product. This enzymatic reaction provides an intracellular de novo source of dTMP, an essential precursor for DNA biosynthesis. This is Thymidylate synthase from Allorhizobium ampelinum (strain ATCC BAA-846 / DSM 112012 / S4) (Agrobacterium vitis (strain S4)).